The primary structure comprises 285 residues: Meiotically up-regulated gene 74 protein (285 aa).

The protein localises to the cytoplasm. Its function is as follows. Has a role in meiosis. The polypeptide is Meiotically up-regulated gene 74 protein (mug74) (Schizosaccharomyces pombe (strain 972 / ATCC 24843) (Fission yeast)).